The chain runs to 144 residues: Putative pre-16S rRNA nuclease (144 aa).

Belongs to the YqgF nuclease family.

It is found in the cytoplasm. Its function is as follows. Could be a nuclease involved in processing of the 5'-end of pre-16S rRNA. This Blochmanniella pennsylvanica (strain BPEN) protein is Putative pre-16S rRNA nuclease.